The primary structure comprises 130 residues: MGKSWALLTHLHSVAGPSITLLYPLYASVCAMESPSKVDDEQWLAYWILYSFITLLEMVAEPVLYWIPVWYPVKLLFVAWLALPQFKGASFIYDKVVREQLRKYRGRNRNGDADHKVHILKAEADHGRVH.

Helical transmembrane passes span tryptophan 5 to leucine 25, glutamine 42 to proline 62, and valine 63 to leucine 83.

The protein belongs to the DP1 family. Expressed in aleurone tissue and embryo.

It is found in the membrane. The protein is Protein HVA22 (HVA22) of Hordeum vulgare (Barley).